A 510-amino-acid chain; its full sequence is P-(S)-hydroxymandelonitrile lyase (510 aa).

An N-terminal signal peptide occupies residues 1-34; sequence MAVFISSSGSPGRATATTTTTTTLLLAVLAAAAA. Substrate is bound at residue 116–118; that stretch reads NGG. 3 cysteine pairs are disulfide-bonded: cysteine 121-cysteine 377, cysteine 277-cysteine 289, and cysteine 313-cysteine 344. An N-linked (GlcNAc...) asparagine glycan is attached at asparagine 172. Substrate is bound at residue 212–213; the sequence is ES. Serine 213 is a catalytic residue. A glycan (N-linked (GlcNAc...) asparagine) is linked at asparagine 365. Active-site residues include aspartate 414 and histidine 469. 465–469 lines the substrate pocket; that stretch reads SGAGH.

It belongs to the peptidase S10 family. In terms of assembly, heterotetramer of two A and two B chains. The A and B chains are linked by a disulfide bond. The N-terminus of chain A is blocked. Primary leaves of seedlings.

The catalysed reaction is (S)-4-hydroxymandelonitrile = 4-hydroxybenzaldehyde + hydrogen cyanide. Involved in cyanogenesis, the release of HCN from injured tissues. Is involved in the catabolism of the cyanogenic glycoside dhurrin. The polypeptide is P-(S)-hydroxymandelonitrile lyase (Sorghum bicolor (Sorghum)).